A 1009-amino-acid chain; its full sequence is Probable beta-galactosidase B (1009 aa).

An N-terminal signal peptide occupies residues 1–27 (MKTIAGLSWISALSSLASLPNGLGVSA). Y96 provides a ligand contact to substrate. N-linked (GlcNAc...) asparagine glycosylation occurs at N106. Substrate-binding residues include N141, A142, E143, and N201. Residue E202 is the Proton donor of the active site. Residue Y271 participates in substrate binding. A disulfide bond links C277 and C330. Catalysis depends on E314, which acts as the Nucleophile. Y379 contacts substrate. 12 N-linked (GlcNAc...) asparagine glycosylation sites follow: N467, N495, N547, N593, N632, N672, N707, N775, N782, N789, N795, and N914.

Belongs to the glycosyl hydrolase 35 family.

It is found in the secreted. It catalyses the reaction Hydrolysis of terminal non-reducing beta-D-galactose residues in beta-D-galactosides.. Cleaves beta-linked terminal galactosyl residues from gangliosides, glycoproteins, and glycosaminoglycans. In Pyrenophora tritici-repentis (strain Pt-1C-BFP) (Wheat tan spot fungus), this protein is Probable beta-galactosidase B (lacB).